The chain runs to 432 residues: Adenylosuccinate synthetase (432 aa).

GTP contacts are provided by residues 13–19 (GDEGKGK) and 41–43 (GHT). The active-site Proton acceptor is the Asp-14. 2 residues coordinate Mg(2+): Asp-14 and Gly-41. IMP contacts are provided by residues 14–17 (DEGK), 39–42 (NAGH), Thr-130, Arg-144, Gln-225, Thr-240, and Arg-304. Catalysis depends on His-42, which acts as the Proton donor. Residue 300–306 (AVTGRPR) participates in substrate binding. GTP-binding positions include Arg-306, 332–334 (KLD), and 415–417 (STG).

Belongs to the adenylosuccinate synthetase family. As to quaternary structure, homodimer. Mg(2+) is required as a cofactor.

It is found in the cytoplasm. It catalyses the reaction IMP + L-aspartate + GTP = N(6)-(1,2-dicarboxyethyl)-AMP + GDP + phosphate + 2 H(+). Its pathway is purine metabolism; AMP biosynthesis via de novo pathway; AMP from IMP: step 1/2. Plays an important role in the de novo pathway of purine nucleotide biosynthesis. Catalyzes the first committed step in the biosynthesis of AMP from IMP. This Glaesserella parasuis serovar 5 (strain SH0165) (Haemophilus parasuis) protein is Adenylosuccinate synthetase.